A 564-amino-acid chain; its full sequence is Potassium-transporting ATPase potassium-binding subunit (564 aa).

The next 10 helical transmembrane spans lie at 7–27, 67–87, 135–155, 179–199, 258–278, 286–306, 382–402, 420–440, 487–507, and 528–548; these read LLIL…GRFF, AWAL…MLML, VGLT…LVAL, LYAL…QGVP, FELV…GHYV, AILG…LWAE, VGLN…GLMI, LLVA…AIAA, LMLS…VLAL, and GLLF…LTFL.

This sequence belongs to the KdpA family. In terms of assembly, the system is composed of three essential subunits: KdpA, KdpB and KdpC.

It is found in the cell inner membrane. Its function is as follows. Part of the high-affinity ATP-driven potassium transport (or Kdp) system, which catalyzes the hydrolysis of ATP coupled with the electrogenic transport of potassium into the cytoplasm. This subunit binds the periplasmic potassium ions and delivers the ions to the membrane domain of KdpB through an intramembrane tunnel. This Pseudomonas syringae pv. tomato (strain ATCC BAA-871 / DC3000) protein is Potassium-transporting ATPase potassium-binding subunit.